We begin with the raw amino-acid sequence, 61 residues long: Metallothionein-1A (61 aa).

Met-1 is modified (N-acetylmethionine). The segment at 1-29 (MDPNCSCPTGGSCSCAGSCTCKACRCPSC) is beta. The a divalent metal cation site is built by Cys-5, Cys-7, Cys-13, Cys-15, Cys-19, Cys-21, Cys-24, Cys-26, Cys-29, Cys-33, Cys-34, Cys-36, Cys-37, Cys-41, Cys-44, Cys-48, Cys-50, and Cys-57. Positions 30-61 (KKSCCSCCPVGCAKCAQGCVCKGASDKCSCCA) are alpha. Ser-58 carries the post-translational modification Phosphoserine. A divalent metal cation contacts are provided by Cys-59 and Cys-60.

The protein belongs to the metallothionein superfamily. Type 1 family. As to quaternary structure, monomer.

Metallothioneins have a high content of cysteine residues that bind various heavy metals; these proteins are transcriptionally regulated by both heavy metals and glucocorticoids. In Bos taurus (Bovine), this protein is Metallothionein-1A (MT1A).